We begin with the raw amino-acid sequence, 246 residues long: MPRYKLIIEYDGTPYCGWQIQENGPSIQGALEDAAKAICGEAIRVRGAGRTDAGVHALAQVAHCDVPKQLPPGRLRDALNAHLRPQPIGVITAEIVPDDFEARFSAIKRHYVYRISNRRANLALAINRAWRVPRRLDSDAMHEAAQRLIGKHDFTTFRDTECQAKSPDKTLDQLDVIRDGDEIRIVTSARSFLHSQVRSMVGSLVWVGEGRWSADDLAAALAARSRSACGPVAPPDGLYLVKVDYE.

Residue aspartate 52 is the Nucleophile of the active site. Tyrosine 111 is a substrate binding site.

Belongs to the tRNA pseudouridine synthase TruA family. As to quaternary structure, homodimer.

The catalysed reaction is uridine(38/39/40) in tRNA = pseudouridine(38/39/40) in tRNA. Its function is as follows. Formation of pseudouridine at positions 38, 39 and 40 in the anticodon stem and loop of transfer RNAs. In Rhodopseudomonas palustris (strain BisA53), this protein is tRNA pseudouridine synthase A.